The following is a 189-amino-acid chain: Anthranilate synthase component 2 (189 aa).

In terms of domain architecture, Glutamine amidotransferase type-1 spans 1–189 (MILIIDNYDS…QLLKNFLDSD (189 aa)). Residue 52–54 (GPG) coordinates L-glutamine. The Nucleophile; for GATase activity role is filled by Cys79. Residues Gln83 and 129-130 (SL) each bind L-glutamine. Catalysis depends on residues His169 and Glu171.

In terms of assembly, tetramer of two components I and two components II.

It localises to the plastid. The protein localises to the chloroplast. It carries out the reaction chorismate + L-glutamine = anthranilate + pyruvate + L-glutamate + H(+). Its pathway is amino-acid biosynthesis; L-tryptophan biosynthesis; L-tryptophan from chorismate: step 1/5. The polypeptide is Anthranilate synthase component 2 (trpG) (Porphyra purpurea (Red seaweed)).